Here is a 260-residue protein sequence, read N- to C-terminus: Troponin I 3 (260 aa).

Positions 192–219 (DLDEIMAKKKGTADGKPEWSKKEKKEEE) are enriched in basic and acidic residues. A disordered region spans residues 192–260 (DLDEIMAKKK…EEEEEEEEEE (69 aa)). Residues 231 to 260 (PEAEPEPEAAEPAAEEPEAEEEEEEEEEEE) are compositionally biased toward acidic residues.

Belongs to the troponin I family. In terms of tissue distribution, expressed in body wall muscle from first larval stage to adult. In adults expression is predominantly in vulval and anal muscles, body wall muscle expression is weaker. Also expressed in vulval muscles of hermaphrodites and the sex muscles of males.

In terms of biological role, troponin I is the inhibitory subunit of troponin, the thin filament regulatory complex which confers calcium-sensitivity to muscle actomyosin ATPase activity. This is Troponin I 3 (tni-3) from Caenorhabditis elegans.